The chain runs to 367 residues: Cycloaraneosene synthase sdnA (367 aa).

The signal sequence occupies residues 1–24; that stretch reads MSLYGLFTLATSYLPSVGGGAALA. The Mg(2+) site is built by aspartate 115, asparagine 260, and serine 264. The short motif at 115–119 is the DDXXD motif element; it reads DDQFD. An N-linked (GlcNAc...) asparagine glycan is attached at asparagine 276.

It belongs to the terpene synthase family. Mg(2+) is required as a cofactor.

The catalysed reaction is (2E,6E,10E)-geranylgeranyl diphosphate = cycloaraneosene + diphosphate. The protein operates within antibiotic biosynthesis. In terms of biological role, cycloaraneosene synthase; part of the gene cluster that mediates the biosynthesis of sordarin and hypoxysordarin, glycoside antibiotics with a unique tetracyclic diterpene aglycone structure. First, the geranylgeranyl diphosphate synthase sdnC constructs GGDP from farnesyl diphosphate and isopentenyl diphosphate. The diterpene cyclase sdnA then catalyzes the cyclization of GGDP to afford cycloaraneosene. Cycloaraneosene is then hydroxylated four times by the putative cytochrome P450 monooxygenases sdnB, sdnE, sdnF and sdnH to give a hydroxylated cycloaraneosene derivative such as cycloaraneosene-8,9,13,19-tetraol. Although the order of the hydroxylations is unclear, at least C8, C9 and C13 of the cycloaraneosene skeleton are hydroxylated before the sordaricin formation. Dehydration of the 13-hydroxy group of the hydroxylated cycloaraneosene derivative might be catalyzed by an unassigned hypothetical protein such as sdnG and sdnP to construct the cyclopentadiene moiety. The FAD-dependent oxidoreductase sdnN is proposed to catalyze the oxidation at C9 of the hydroxylated cycloaraneosene derivative and also catalyze the Baeyer-Villiger oxidation to give the lactone intermediate. The presumed lactone intermediate would be hydrolyzed to give an acrolein moiety and a carboxylate moiety. Then, [4+2]cycloaddition would occur between the acrolein moiety and the cyclopentadiene moiety to give sordaricin. SdnN might also be involved in the [4+2]cycloaddition after the hypothesized oxidation to accommodate the oxidized product and prompt the [4+2]cycloaddition. GDP-6-deoxy-D-altrose may be biosynthesized from GDP-D-mannose by the putative GDP-mannose-4,6-dehydratase sdnI and the short-chain dehydrogenase sdnK. The glycosyltransferase sdnJ catalyzes the attachment of 6-deoxy-D-altrose onto the 19-hydroxy group of sordaricin to give 4'-O-demethylsordarin. The methyltransferase sdnD would complete the biosynthesis of sordarin. Sordarin can be further modified into hypoxysordarin. The unique acyl chain at the 3'-hydroxy group of hypoxysordarin would be constructed by an iterative type I PKS sdnO and the trans-acting polyketide methyltransferase sdnL. SdnL would be responsible for the introduction of an alpha-methyl group of the polyketide chain. Alternatively, the beta-lactamase-like protein sdnR might be responsible for the cleavage and transfer of the polyketide chain from the PKS sdnO to sordarin. Two putative cytochrome P450 monooxygenases, sdnQ and sdnT, might catalyze the epoxidations of the polyketide chain to complete the biosynthesis of hypoxysordarin. Transcriptional regulators sdnM and sdnS are presumably encoded for the transcriptional regulation of the expression of the sdn gene cluster. The sequence is that of Cycloaraneosene synthase sdnA from Sordaria araneosa (Pleurage araneosa).